The chain runs to 482 residues: ATP synthase subunit beta (482 aa).

ATP is bound at residue 167 to 174 (GGAGVGKT).

This sequence belongs to the ATPase alpha/beta chains family. F-type ATPases have 2 components, CF(1) - the catalytic core - and CF(0) - the membrane proton channel. CF(1) has five subunits: alpha(3), beta(3), gamma(1), delta(1), epsilon(1). CF(0) has three main subunits: a(1), b(2) and c(9-12). The alpha and beta chains form an alternating ring which encloses part of the gamma chain. CF(1) is attached to CF(0) by a central stalk formed by the gamma and epsilon chains, while a peripheral stalk is formed by the delta and b chains.

It localises to the cell membrane. The catalysed reaction is ATP + H2O + 4 H(+)(in) = ADP + phosphate + 5 H(+)(out). In terms of biological role, produces ATP from ADP in the presence of a proton gradient across the membrane. The catalytic sites are hosted primarily by the beta subunits. The protein is ATP synthase subunit beta of Corynebacterium aurimucosum (strain ATCC 700975 / DSM 44827 / CIP 107346 / CN-1) (Corynebacterium nigricans).